A 680-amino-acid polypeptide reads, in one-letter code: Dihydroxyacetone phosphate acyltransferase (680 aa).

Phosphoserine is present on residues serine 12 and serine 17. An HXXXXD motif motif is present at residues 162–167 (HRSYID). The residue at position 643 (lysine 643) is an N6-acetyllysine. The Microbody targeting signal signature appears at 678–680 (AKL).

This sequence belongs to the GPAT/DAPAT family. As to quaternary structure, part of a heterotrimeric complex composed of GNPAT, AGPS and a modified form of GNPAT.

The protein localises to the peroxisome membrane. It catalyses the reaction dihydroxyacetone phosphate + an acyl-CoA = a 1-acylglycerone 3-phosphate + CoA. The enzyme catalyses dihydroxyacetone phosphate + hexadecanoyl-CoA = 1-hexadecanoylglycerone 3-phosphate + CoA. It participates in membrane lipid metabolism; glycerophospholipid metabolism. Dihydroxyacetonephosphate acyltransferase catalyzing the first step in the biosynthesis of plasmalogens, a subset of phospholipids that differ from other glycerolipids by having an alkyl chain attached through a vinyl ether linkage at the sn-1 position of the glycerol backbone, and which unique physical properties have an impact on various aspects of cell signaling and membrane biology. This chain is Dihydroxyacetone phosphate acyltransferase, found in Bos taurus (Bovine).